The sequence spans 463 residues: Exodeoxyribonuclease 7 large subunit (463 aa).

Belongs to the XseA family. As to quaternary structure, heterooligomer composed of large and small subunits.

The protein resides in the cytoplasm. It carries out the reaction Exonucleolytic cleavage in either 5'- to 3'- or 3'- to 5'-direction to yield nucleoside 5'-phosphates.. Its function is as follows. Bidirectionally degrades single-stranded DNA into large acid-insoluble oligonucleotides, which are then degraded further into small acid-soluble oligonucleotides. The polypeptide is Exodeoxyribonuclease 7 large subunit (Pseudomonas syringae pv. syringae (strain B728a)).